Reading from the N-terminus, the 248-residue chain is Deoxyribose-phosphate aldolase (248 aa).

Asp-117 functions as the Proton donor/acceptor in the catalytic mechanism. Residue Lys-179 is the Schiff-base intermediate with acetaldehyde of the active site. Lys-208 acts as the Proton donor/acceptor in catalysis.

It belongs to the DeoC/FbaB aldolase family. DeoC type 1 subfamily.

It localises to the cytoplasm. It carries out the reaction 2-deoxy-D-ribose 5-phosphate = D-glyceraldehyde 3-phosphate + acetaldehyde. It participates in carbohydrate degradation; 2-deoxy-D-ribose 1-phosphate degradation; D-glyceraldehyde 3-phosphate and acetaldehyde from 2-deoxy-alpha-D-ribose 1-phosphate: step 2/2. Functionally, catalyzes a reversible aldol reaction between acetaldehyde and D-glyceraldehyde 3-phosphate to generate 2-deoxy-D-ribose 5-phosphate. In Thermotoga sp. (strain RQ2), this protein is Deoxyribose-phosphate aldolase.